A 118-amino-acid chain; its full sequence is Large ribosomal subunit protein uL18 (118 aa).

This sequence belongs to the universal ribosomal protein uL18 family. As to quaternary structure, part of the 50S ribosomal subunit; part of the 5S rRNA/L5/L18/L25 subcomplex. Contacts the 5S and 23S rRNAs.

Functionally, this is one of the proteins that bind and probably mediate the attachment of the 5S RNA into the large ribosomal subunit, where it forms part of the central protuberance. In Campylobacter lari (strain RM2100 / D67 / ATCC BAA-1060), this protein is Large ribosomal subunit protein uL18.